Reading from the N-terminus, the 103-residue chain is Pyrimidine/purine nucleoside phosphorylase (103 aa).

Belongs to the nucleoside phosphorylase PpnP family.

It carries out the reaction a purine D-ribonucleoside + phosphate = a purine nucleobase + alpha-D-ribose 1-phosphate. The enzyme catalyses adenosine + phosphate = alpha-D-ribose 1-phosphate + adenine. The catalysed reaction is cytidine + phosphate = cytosine + alpha-D-ribose 1-phosphate. It catalyses the reaction guanosine + phosphate = alpha-D-ribose 1-phosphate + guanine. It carries out the reaction inosine + phosphate = alpha-D-ribose 1-phosphate + hypoxanthine. The enzyme catalyses thymidine + phosphate = 2-deoxy-alpha-D-ribose 1-phosphate + thymine. The catalysed reaction is uridine + phosphate = alpha-D-ribose 1-phosphate + uracil. It catalyses the reaction xanthosine + phosphate = alpha-D-ribose 1-phosphate + xanthine. In terms of biological role, catalyzes the phosphorolysis of diverse nucleosides, yielding D-ribose 1-phosphate and the respective free bases. Can use uridine, adenosine, guanosine, cytidine, thymidine, inosine and xanthosine as substrates. Also catalyzes the reverse reactions. This is Pyrimidine/purine nucleoside phosphorylase from Shewanella frigidimarina (strain NCIMB 400).